A 101-amino-acid polypeptide reads, in one-letter code: Putative pterin-4-alpha-carbinolamine dehydratase (101 aa).

This sequence belongs to the pterin-4-alpha-carbinolamine dehydratase family.

It catalyses the reaction (4aS,6R)-4a-hydroxy-L-erythro-5,6,7,8-tetrahydrobiopterin = (6R)-L-erythro-6,7-dihydrobiopterin + H2O. This is Putative pterin-4-alpha-carbinolamine dehydratase from Rhizobium rhizogenes (strain K84 / ATCC BAA-868) (Agrobacterium radiobacter).